We begin with the raw amino-acid sequence, 284 residues long: 4-diphosphocytidyl-2-C-methyl-D-erythritol kinase (284 aa).

Lys-14 is an active-site residue. ATP is bound at residue 98–108 (PMGGGLGGGSS). Asp-140 is a catalytic residue.

The protein belongs to the GHMP kinase family. IspE subfamily.

It carries out the reaction 4-CDP-2-C-methyl-D-erythritol + ATP = 4-CDP-2-C-methyl-D-erythritol 2-phosphate + ADP + H(+). The protein operates within isoprenoid biosynthesis; isopentenyl diphosphate biosynthesis via DXP pathway; isopentenyl diphosphate from 1-deoxy-D-xylulose 5-phosphate: step 3/6. In terms of biological role, catalyzes the phosphorylation of the position 2 hydroxy group of 4-diphosphocytidyl-2C-methyl-D-erythritol. The chain is 4-diphosphocytidyl-2-C-methyl-D-erythritol kinase from Shewanella sp. (strain MR-7).